The chain runs to 191 residues: Cell division protein SepF (191 aa).

The span at 151 to 164 (SSSPEEASPSSVST) shows a compositional bias: low complexity. A disordered region spans residues 151–191 (SSSPEEASPSSVSTEKTPQYSLGKNTTPEPAWGNSKLSAYS). Residues 165–178 (EKTPQYSLGKNTTP) are compositionally biased toward polar residues.

Belongs to the SepF family. As to quaternary structure, homodimer. Interacts with FtsZ.

Its subcellular location is the cytoplasm. Functionally, cell division protein that is part of the divisome complex and is recruited early to the Z-ring. Probably stimulates Z-ring formation, perhaps through the cross-linking of FtsZ protofilaments. Its function overlaps with FtsA. This chain is Cell division protein SepF, found in Prochlorococcus marinus (strain MIT 9301).